The sequence spans 1755 residues: Transposon Ty1-MR2 Gag-Pol polyprotein (1755 aa).

Polar residues-rich tracts occupy residues 1–10 (MESQQLSNYP), 48–60 (TKANSQQTTTPAS), and 127–152 (QSQFPQYPSSVGTPLSTPSPESGNTF). 3 disordered regions span residues 1-93 (MESQ…MMTQ), 126-173 (PQSQ…RPPP), and 352-421 (GSRN…SKST). A compositionally biased stretch (low complexity) spans 153–165 (TDSSSADSDMTST). The tract at residues 299-401 (NNGIHINNKV…NSKSKTARAH (103 aa)) is RNA-binding. Positions 402-418 (NVSTSNNSPSTDNDSIS) are enriched in low complexity. Ser-416 carries the post-translational modification Phosphoserine. The active-site For protease activity; shared with dimeric partner is Asp-461. An integrase-type zinc finger-like region spans residues 583-640 (NVHTSESTRKYPYPFIHRMLAHANAQTIRYSLKNNTITYFNESDVDWSSAIDYQCPDC). Residues 660 to 835 (NSYEPFQYLH…AGLDISTLLP (176 aa)) enclose the Integrase catalytic domain. Mg(2+) is bound by residues Asp-671 and Asp-736. Disordered stretches follow at residues 956 to 1087 (SKAV…ETEK), 1092 to 1111 (RSPSIDASPPENNSSHNIVP), and 1130 to 1186 (DLPL…EDNE). Low complexity predominate over residues 960 to 969 (SPTDSTPPST). Over residues 1005-1015 (STPQISNIEST) the composition is skewed to polar residues. Basic and acidic residues predominate over residues 1038–1053 (ESSHASKSKDFRHSDS). Polar residues-rich tracts occupy residues 1054–1082 (YSENETNHTNVPISSTGGTNNKTVPQISD) and 1101–1111 (PENNSSHNIVP). A Bipartite nuclear localization signal motif is present at residues 1178–1212 (KKRSLEDNETEIKVSRDTWNTKNMRSLEPPRSKKR). A Reverse transcriptase Ty1/copia-type domain is found at 1338-1476 (NNYYITQLDI…DILGLEIKYQ (139 aa)). Mg(2+)-binding residues include Asp-1346, Asp-1427, Asp-1428, Asp-1610, Glu-1652, and Asp-1685. Positions 1610-1752 (DASYGNQPYY…IKTFKLLTNK (143 aa)) constitute an RNase H Ty1/copia-type domain.

In terms of assembly, the capsid protein forms a homotrimer, from which the VLPs are assembled. The protease is a homodimer, whose active site consists of two apposed aspartic acid residues. Post-translationally, initially, virus-like particles (VLPs) are composed of the structural unprocessed proteins Gag and Gag-Pol, and also contain the host initiator methionine tRNA (tRNA(i)-Met) which serves as a primer for minus-strand DNA synthesis, and a dimer of genomic Ty RNA. Processing of the polyproteins occurs within the particle and proceeds by an ordered pathway, called maturation. First, the protease (PR) is released by autocatalytic cleavage of the Gag-Pol polyprotein yielding capsid protein p45 and a Pol-p154 precursor protein. This cleavage is a prerequisite for subsequent processing of Pol-p154 at the remaining sites to release the mature structural and catalytic proteins. Maturation takes place prior to the RT reaction and is required to produce transposition-competent VLPs.

It is found in the cytoplasm. The protein resides in the nucleus. It catalyses the reaction DNA(n) + a 2'-deoxyribonucleoside 5'-triphosphate = DNA(n+1) + diphosphate. The catalysed reaction is Endonucleolytic cleavage to 5'-phosphomonoester.. Its function is as follows. Capsid protein (CA) is the structural component of the virus-like particle (VLP), forming the shell that encapsulates the retrotransposons dimeric RNA genome. The particles are assembled from trimer-clustered units and there are holes in the capsid shells that allow for the diffusion of macromolecules. CA also has nucleocapsid-like chaperone activity, promoting primer tRNA(i)-Met annealing to the multipartite primer-binding site (PBS), dimerization of Ty1 RNA and initiation of reverse transcription. Functionally, the aspartyl protease (PR) mediates the proteolytic cleavages of the Gag and Gag-Pol polyproteins after assembly of the VLP. In terms of biological role, reverse transcriptase/ribonuclease H (RT) is a multifunctional enzyme that catalyzes the conversion of the retro-elements RNA genome into dsDNA within the VLP. The enzyme displays a DNA polymerase activity that can copy either DNA or RNA templates, and a ribonuclease H (RNase H) activity that cleaves the RNA strand of RNA-DNA heteroduplexes during plus-strand synthesis and hydrolyzes RNA primers. The conversion leads to a linear dsDNA copy of the retrotransposon that includes long terminal repeats (LTRs) at both ends. Integrase (IN) targets the VLP to the nucleus, where a subparticle preintegration complex (PIC) containing at least integrase and the newly synthesized dsDNA copy of the retrotransposon must transit the nuclear membrane. Once in the nucleus, integrase performs the integration of the dsDNA into the host genome. The protein is Transposon Ty1-MR2 Gag-Pol polyprotein (TY1B-MR2) of Saccharomyces cerevisiae (strain ATCC 204508 / S288c) (Baker's yeast).